A 107-amino-acid chain; its full sequence is Anti-adapter protein IraM (107 aa).

This sequence belongs to the IraM/RssC family.

It localises to the cytoplasm. Inhibits RpoS proteolysis by regulating RssB activity, thereby increasing the stability of the sigma stress factor RpoS during magnesium starvation. This chain is Anti-adapter protein IraM, found in Escherichia coli O7:K1 (strain IAI39 / ExPEC).